A 359-amino-acid chain; its full sequence is Uroporphyrinogen decarboxylase (359 aa).

R28, A30, R32, D79, Y157, S212, and H335 together coordinate coproporphyrinogen III.

Belongs to the uroporphyrinogen decarboxylase family. As to quaternary structure, monomer.

The protein localises to the nucleus. Its subcellular location is the cytoplasm. The enzyme catalyses uroporphyrinogen III + 4 H(+) = coproporphyrinogen III + 4 CO2. The catalysed reaction is uroporphyrinogen I + 4 H(+) = coproporphyrinogen I + 4 CO2. It functions in the pathway porphyrin-containing compound metabolism; protoporphyrin-IX biosynthesis; coproporphyrinogen-III from 5-aminolevulinate: step 4/4. Functionally, catalyzes the sequential decarboxylation of four acetate groups of uroporphyrinogen-III (octacarboxyporphyrin) to yield coproporphyrinogen-III (tetracarboxyporphyrin) with the formation of intermediate hepta-, hexa- and penta-carboxylate porphyrinogens in the heme biosynthesis pathway. Acts on a number of porphyrinogens, but only coproporphyrinogen III can ultimately be converted to heme. The polypeptide is Uroporphyrinogen decarboxylase (hem12) (Schizosaccharomyces pombe (strain 972 / ATCC 24843) (Fission yeast)).